A 329-amino-acid chain; its full sequence is Helicase VP6-A (329 aa).

Disordered stretches follow at residues 28 to 130 (NLVD…TNGG) and 189 to 232 (DLRR…SEEP). Composition is skewed to basic and acidic residues over residues 36 to 58 (EGGK…KDGE), 65 to 83 (GQKE…DRRI), and 96 to 109 (SGER…RGDG). Residue K110 coordinates ATP. Residues 110–129 (KVGGGGGDADAGVGATGTNG) are compositionally biased toward gly residues. Composition is skewed to basic and acidic residues over residues 189–207 (DLRR…ERGG) and 215–232 (HGDA…SEEP).

Belongs to the reoviruses VP6 family. Homohexamer.

It localises to the virion. The enzyme catalyses ATP + H2O = ADP + phosphate + H(+). Its function is as follows. ATP dependent RNA helicase essential for RNA packaging and viral transcription. Possesses ss- and dsRNA-binding capacity. The sequence is that of Helicase VP6-A (Segment-9) from Bluetongue virus 10 (isolate USA) (BTV 10).